Reading from the N-terminus, the 487-residue chain is MAVGPTEGKQPPSESFSPTHHQIIAPSPILAVPTLAFSAAQVEIVCKTLEDSGDIERLARFLWSLPVALPNMHEILNCEAVLRARAVVAYHVGNFRELYAIIENHKFTKASYGKLQAMWLEAHYIEAEKLRGRSLGPVDKYRVRKKFPLPPTIWDGEQKTHCFKERTRSLLREWYLQDPYPNPTKKRELAKATGLNPTQVGNWFKNRRQRDRAAAAKNRIQHSQNSSGMGCRSRRADGAASPTPSDSSDSDISLGTHSPVPSSLQLQHSPGSTSNGANDREESLSVDDDKPRDLSGSLPLPLSLPLPLASPTHTPPQLPPGYGGGAGAGPGGPLTGPGCLPPFKLDAATSLFSAGCYLQSFSNLKEMSQQFPIQPIVLRPHPQLPQSLALNGASGGPPLHHPAYAAAYSVECVPGGHGPPHPPPKLRINSPEKLNSTAVAAAASVGGGGGNQHHEPTTTGYHHSGQLMLHRPFSTSPELKHSAPEIT.

Residues 154-214 (WDGEQKTHCF…KNRRQRDRAA (61 aa)) constitute a DNA-binding region (homeobox). Disordered stretches follow at residues 182–330 (NPTK…GAGP) and 443–463 (ASVGGGGGNQHHEPTTTGYHH). A compositionally biased stretch (polar residues) spans 255–277 (GTHSPVPSSLQLQHSPGSTSNGA). Residues 278–293 (NDREESLSVDDDKPRD) show a composition bias toward basic and acidic residues. Positions 294-312 (LSGSLPLPLSLPLPLASPT) are enriched in low complexity. Residues 321-330 (GYGGGAGAGP) are compositionally biased toward gly residues.

This sequence belongs to the SIX/Sine oculis homeobox family. Expressed during early development of the head. First expressed in a band around the anterior end of stage 5 blastoderm embryo, at 93% to 85% egg length. By gastrula stage, site of expression shifts to the dorsal-anterior region. At stage 12, expression is found in the clypeolabrum, the stomodaeum, and in ectoderm dorsal to the future supraesophageal ganglion.

Its subcellular location is the nucleus. Its function is as follows. May be involved in head or eye development; development of the clypeolabrum and several head sensory organs. In Drosophila melanogaster (Fruit fly), this protein is Protein Optix (Optix).